The sequence spans 237 residues: Small ribosomal subunit protein uS17m (237 aa).

It belongs to the universal ribosomal protein uS17 family. As to quaternary structure, component of the mitochondrial small ribosomal subunit (mt-SSU). Mature yeast 74S mitochondrial ribosomes consist of a small (37S) and a large (54S) subunit. The 37S small subunit contains a 15S ribosomal RNA (15S mt-rRNA) and 34 different proteins. The 54S large subunit contains a 21S rRNA (21S mt-rRNA) and 46 different proteins.

It localises to the mitochondrion. Its function is as follows. Component of the mitochondrial ribosome (mitoribosome), a dedicated translation machinery responsible for the synthesis of mitochondrial genome-encoded proteins, including at least some of the essential transmembrane subunits of the mitochondrial respiratory chain. The mitoribosomes are attached to the mitochondrial inner membrane and translation products are cotranslationally integrated into the membrane. uS17m may have a meiosis-specific role as it accumulates during the middle stage of sporulation. The polypeptide is Small ribosomal subunit protein uS17m (MRPS17) (Saccharomyces cerevisiae (strain ATCC 204508 / S288c) (Baker's yeast)).